The following is a 439-amino-acid chain: Phosphoribosylamine--glycine ligase (439 aa).

In terms of domain architecture, ATP-grasp spans 109 to 317 (REFMERNKIP…LVEISERIID (209 aa)). 136–195 (IDEFGKPVVVKPLGLTGGKGVKVVGYQLKDNEEAKEYAEYLIRKDGKVLIEERTDGVEFT) is an ATP binding site. Mg(2+) contacts are provided by Gln275, Glu287, and Asn289. The Mn(2+) site is built by Gln275, Glu287, and Asn289.

The protein belongs to the GARS family. The cofactor is Mg(2+). Mn(2+) serves as cofactor.

It catalyses the reaction 5-phospho-beta-D-ribosylamine + glycine + ATP = N(1)-(5-phospho-beta-D-ribosyl)glycinamide + ADP + phosphate + H(+). Its pathway is purine metabolism; IMP biosynthesis via de novo pathway; N(1)-(5-phospho-D-ribosyl)glycinamide from 5-phospho-alpha-D-ribose 1-diphosphate: step 2/2. The protein is Phosphoribosylamine--glycine ligase of Pyrococcus furiosus (strain ATCC 43587 / DSM 3638 / JCM 8422 / Vc1).